The sequence spans 196 residues: Charged multivesicular body protein 1a (196 aa).

Methionine 1 carries the post-translational modification N-acetylmethionine. Positions 5–47 (LFQLKFTAKQLEKLAKKAEKDSKAEQAKVKKALLQKNVECARV) form a coiled coil. A Phosphoserine modification is found at serine 101. Residues 102-124 (TMDLQKVSSVMDRFEQQVQNLDV) are a coiled coil. The residue at position 173 (serine 173) is a Phosphoserine. The tract at residues 173–196 (SAVGESSVRSQEDQLSRRLAALRN) is disordered. The short motif at 185–195 (DQLSRRLAALR) is the MIT-interacting motif element.

The protein belongs to the SNF7 family. In terms of assembly, probable peripherally associated component of the endosomal sorting required for transport complex III (ESCRT-III). ESCRT-III components are thought to multimerize to form a flat lattice on the perimeter membrane of the endosome. Several assembly forms of ESCRT-III may exist that interact and act sequentially. Self-associates. Interacts with CHMP1B. Interacts with VPS4A. Interacts with VPS4B. Interacts with PHF1. Interacts with IST1. Interacts with MITD1. As to expression, expressed in placenta, cultured skin fibroblasts and in osteoblast cell line MG-63.

It localises to the cytoplasm. The protein resides in the endosome membrane. The protein localises to the nucleus matrix. In terms of biological role, probable peripherally associated component of the endosomal sorting required for transport complex III (ESCRT-III) which is involved in multivesicular bodies (MVBs) formation and sorting of endosomal cargo proteins into MVBs. MVBs contain intraluminal vesicles (ILVs) that are generated by invagination and scission from the limiting membrane of the endosome and mostly are delivered to lysosomes enabling degradation of membrane proteins, such as stimulated growth factor receptors, lysosomal enzymes and lipids. The MVB pathway appears to require the sequential function of ESCRT-O, -I,-II and -III complexes. ESCRT-III proteins mostly dissociate from the invaginating membrane before the ILV is released. The ESCRT machinery also functions in topologically equivalent membrane fission events, such as the terminal stages of cytokinesis and the budding of enveloped viruses (HIV-1 and other lentiviruses). ESCRT-III proteins are believed to mediate the necessary vesicle extrusion and/or membrane fission activities, possibly in conjunction with the AAA ATPase VPS4. Involved in cytokinesis. Involved in recruiting VPS4A and/or VPS4B to the midbody of dividing cells. May also be involved in chromosome condensation. Targets the Polycomb group (PcG) protein BMI1/PCGF4 to regions of condensed chromatin. May play a role in stable cell cycle progression and in PcG gene silencing. The chain is Charged multivesicular body protein 1a (CHMP1A) from Homo sapiens (Human).